The sequence spans 89 residues: Cell division topological specificity factor (89 aa).

This sequence belongs to the MinE family.

In terms of biological role, prevents the cell division inhibition by proteins MinC and MinD at internal division sites while permitting inhibition at polar sites. This ensures cell division at the proper site by restricting the formation of a division septum at the midpoint of the long axis of the cell. The polypeptide is Cell division topological specificity factor (Edwardsiella ictaluri (strain 93-146)).